The primary structure comprises 165 residues: SsrA-binding protein (165 aa).

Residues 1-10 (MSKKGKKKSK) show a composition bias toward basic residues. The segment at 1–21 (MSKKGKKKSKNNSSVDGNRRL) is disordered.

This sequence belongs to the SmpB family.

It is found in the cytoplasm. In terms of biological role, required for rescue of stalled ribosomes mediated by trans-translation. Binds to transfer-messenger RNA (tmRNA), required for stable association of tmRNA with ribosomes. tmRNA and SmpB together mimic tRNA shape, replacing the anticodon stem-loop with SmpB. tmRNA is encoded by the ssrA gene; the 2 termini fold to resemble tRNA(Ala) and it encodes a 'tag peptide', a short internal open reading frame. During trans-translation Ala-aminoacylated tmRNA acts like a tRNA, entering the A-site of stalled ribosomes, displacing the stalled mRNA. The ribosome then switches to translate the ORF on the tmRNA; the nascent peptide is terminated with the 'tag peptide' encoded by the tmRNA and targeted for degradation. The ribosome is freed to recommence translation, which seems to be the essential function of trans-translation. This Prochlorococcus marinus (strain NATL1A) protein is SsrA-binding protein.